Reading from the N-terminus, the 233-residue chain is N-(5'-phosphoribosyl)anthranilate isomerase (233 aa).

Belongs to the TrpF family.

It carries out the reaction N-(5-phospho-beta-D-ribosyl)anthranilate = 1-(2-carboxyphenylamino)-1-deoxy-D-ribulose 5-phosphate. It functions in the pathway amino-acid biosynthesis; L-tryptophan biosynthesis; L-tryptophan from chorismate: step 3/5. The chain is N-(5'-phosphoribosyl)anthranilate isomerase from Ralstonia pickettii (strain 12J).